Consider the following 358-residue polypeptide: Chorismate synthase (358 aa).

Arg46 lines the NADP(+) pocket. Residues 123 to 125, 235 to 236, Gly275, 290 to 294, and Arg316 each bind FMN; these read RSS, NA, and KPTPS.

Belongs to the chorismate synthase family. Homotetramer. FMNH2 is required as a cofactor.

The catalysed reaction is 5-O-(1-carboxyvinyl)-3-phosphoshikimate = chorismate + phosphate. Its pathway is metabolic intermediate biosynthesis; chorismate biosynthesis; chorismate from D-erythrose 4-phosphate and phosphoenolpyruvate: step 7/7. Its function is as follows. Catalyzes the anti-1,4-elimination of the C-3 phosphate and the C-6 proR hydrogen from 5-enolpyruvylshikimate-3-phosphate (EPSP) to yield chorismate, which is the branch point compound that serves as the starting substrate for the three terminal pathways of aromatic amino acid biosynthesis. This reaction introduces a second double bond into the aromatic ring system. In Helicobacter hepaticus (strain ATCC 51449 / 3B1), this protein is Chorismate synthase.